Consider the following 520-residue polypeptide: UBX domain-containing protein 11 (520 aa).

Residues 1–26 (MSSPLASLSKTRKVPLPSEPMNPGRR) are disordered. Positions 76 to 149 (MAFMTRKLWD…VREMERFLSD (74 aa)) form a coiled coil. The SEP domain occupies 230–294 (LEPIPLKLYR…VSDLRNQVYL (65 aa)). A UBX domain is found at 392–469 (PAPPLSMLRI…GLVPKAALLL (78 aa)). Positions 476-520 (KSSLKFSPGPCPGPGPGPSPGPGPGPSPGPGPGPSPCPGPSPSPQ) are disordered. A compositionally biased stretch (pro residues) spans 484–520 (GPCPGPGPGPSPGPGPGPSPGPGPGPSPCPGPSPSPQ). 3 repeat units span residues 487–494 (PGPGPGPS), 495–502 (PGPGPGPS), and 503–510 (PGPGPGPS). Residues 487–510 (PGPGPGPSPGPGPGPSPGPGPGPS) form a 3 X 8 AA tandem repeats of P-G-P-G-P-G-P-S region.

In terms of assembly, interacts with GNA12, GNA13, RND1, RND2 and RND3.

It is found in the cytoplasm. The protein resides in the cytoskeleton. Its function is as follows. May be involved in the reorganization of actin cytoskeleton mediated by RND1, RND2 and RND3. Promotes RHOA activation mediated by GNA12 and GNA13. The protein is UBX domain-containing protein 11 (UBXN11) of Homo sapiens (Human).